Consider the following 90-residue polypeptide: NELL2-interacting cell ontogeny regulator 1 (90 aa).

A signal peptide spans 1 to 26 (MVSSGYLQAVMLLLAVQLLCFRPSDA).

Belongs to the NICOL family.

It is found in the secreted. In terms of biological role, mRNA-binding protein which interacts with a range of target mRNAs and may promote extracellular matrix production. The polypeptide is NELL2-interacting cell ontogeny regulator 1 (Salmo salar (Atlantic salmon)).